The chain runs to 199 residues: Imidazoleglycerol-phosphate dehydratase (199 aa).

Belongs to the imidazoleglycerol-phosphate dehydratase family.

It localises to the cytoplasm. It catalyses the reaction D-erythro-1-(imidazol-4-yl)glycerol 3-phosphate = 3-(imidazol-4-yl)-2-oxopropyl phosphate + H2O. It functions in the pathway amino-acid biosynthesis; L-histidine biosynthesis; L-histidine from 5-phospho-alpha-D-ribose 1-diphosphate: step 6/9. This Acidithiobacillus ferrooxidans (strain ATCC 53993 / BNL-5-31) (Leptospirillum ferrooxidans (ATCC 53993)) protein is Imidazoleglycerol-phosphate dehydratase.